The chain runs to 123 residues: uncharacterized protein (123 aa).

A Phosphothreonine modification is found at threonine 56. 5 positions are modified to phosphoserine: serine 73, serine 87, serine 97, serine 113, and serine 119.

As to expression, highly expressed in the kidney (at protein level).

It localises to the cytoplasm. This is an uncharacterized protein from Felis catus (Cat).